Consider the following 697-residue polypeptide: Sentrin-specific protease (697 aa).

The span at 1 to 14 (MSRRSDLSDKDSQS) shows a compositional bias: basic and acidic residues. Disordered stretches follow at residues 1–47 (MSRR…QGLG) and 365–387 (SEESTSSSYRQHARSNSSESDSY). A Nuclear localization signal motif is present at residues 15-19 (RKRHW). A Nuclear localization signal motif is present at residues 462–467 (KVEKKK). The protease stretch occupies residues 501–664 (IQICKKDLAT…VFSCQFGEWA (164 aa)). Residues His585, Asp602, and Cys653 contribute to the active site.

This sequence belongs to the peptidase C48 family.

The protein localises to the nucleus envelope. Protease that deconjugates smo-1 from targeted proteins and may catalyze the processing of smo-1 to its mature form. The polypeptide is Sentrin-specific protease (ulp-1) (Caenorhabditis elegans).